A 254-amino-acid polypeptide reads, in one-letter code: 4-hydroxy-tetrahydrodipicolinate reductase (254 aa).

Residue 13-18 (GAAGRM) participates in NAD(+) binding. Arg-39 contributes to the NADP(+) binding site. Residues 86-88 (GTT) and 110-113 (AANT) each bind NAD(+). Residue His-143 is the Proton donor/acceptor of the active site. Position 144 (His-144) interacts with (S)-2,3,4,5-tetrahydrodipicolinate. The active-site Proton donor is the Lys-147. 153 to 154 (GT) provides a ligand contact to (S)-2,3,4,5-tetrahydrodipicolinate.

It belongs to the DapB family.

It localises to the cytoplasm. It catalyses the reaction (S)-2,3,4,5-tetrahydrodipicolinate + NAD(+) + H2O = (2S,4S)-4-hydroxy-2,3,4,5-tetrahydrodipicolinate + NADH + H(+). It carries out the reaction (S)-2,3,4,5-tetrahydrodipicolinate + NADP(+) + H2O = (2S,4S)-4-hydroxy-2,3,4,5-tetrahydrodipicolinate + NADPH + H(+). It participates in amino-acid biosynthesis; L-lysine biosynthesis via DAP pathway; (S)-tetrahydrodipicolinate from L-aspartate: step 4/4. Catalyzes the conversion of 4-hydroxy-tetrahydrodipicolinate (HTPA) to tetrahydrodipicolinate. This is 4-hydroxy-tetrahydrodipicolinate reductase from Zymomonas mobilis subsp. mobilis (strain ATCC 31821 / ZM4 / CP4).